The following is a 160-amino-acid chain: SsrA-binding protein (160 aa).

The protein belongs to the SmpB family.

It is found in the cytoplasm. Functionally, required for rescue of stalled ribosomes mediated by trans-translation. Binds to transfer-messenger RNA (tmRNA), required for stable association of tmRNA with ribosomes. tmRNA and SmpB together mimic tRNA shape, replacing the anticodon stem-loop with SmpB. tmRNA is encoded by the ssrA gene; the 2 termini fold to resemble tRNA(Ala) and it encodes a 'tag peptide', a short internal open reading frame. During trans-translation Ala-aminoacylated tmRNA acts like a tRNA, entering the A-site of stalled ribosomes, displacing the stalled mRNA. The ribosome then switches to translate the ORF on the tmRNA; the nascent peptide is terminated with the 'tag peptide' encoded by the tmRNA and targeted for degradation. The ribosome is freed to recommence translation, which seems to be the essential function of trans-translation. In Novosphingobium aromaticivorans (strain ATCC 700278 / DSM 12444 / CCUG 56034 / CIP 105152 / NBRC 16084 / F199), this protein is SsrA-binding protein.